A 323-amino-acid chain; its full sequence is Fructose-1,6-bisphosphatase class 1 (323 aa).

Mg(2+)-binding residues include Glu-84, Asp-103, Leu-105, and Asp-106. Substrate contacts are provided by residues 106–109 (DGSS), Asn-198, and Lys-264. Residue Glu-270 participates in Mg(2+) binding.

It belongs to the FBPase class 1 family. In terms of assembly, homotetramer. It depends on Mg(2+) as a cofactor.

The protein localises to the cytoplasm. The catalysed reaction is beta-D-fructose 1,6-bisphosphate + H2O = beta-D-fructose 6-phosphate + phosphate. Its pathway is carbohydrate biosynthesis; gluconeogenesis. In Hydrogenovibrio crunogenus (strain DSM 25203 / XCL-2) (Thiomicrospira crunogena), this protein is Fructose-1,6-bisphosphatase class 1.